Here is a 368-residue protein sequence, read N- to C-terminus: Probable dual-specificity RNA methyltransferase RlmN (368 aa).

Glutamate 100 (proton acceptor) is an active-site residue. One can recognise a Radical SAM core domain in the interval 106-344 (QYYGLSVCVT…CVVRQEHGTD (239 aa)). A disulfide bond links cysteine 113 and cysteine 349. [4Fe-4S] cluster-binding residues include cysteine 120, cysteine 124, and cysteine 127. S-adenosyl-L-methionine-binding positions include 172 to 173 (GE), serine 204, 227 to 229 (SLH), and asparagine 305. The active-site S-methylcysteine intermediate is the cysteine 349.

Belongs to the radical SAM superfamily. RlmN family. [4Fe-4S] cluster serves as cofactor.

It is found in the cytoplasm. The catalysed reaction is adenosine(2503) in 23S rRNA + 2 reduced [2Fe-2S]-[ferredoxin] + 2 S-adenosyl-L-methionine = 2-methyladenosine(2503) in 23S rRNA + 5'-deoxyadenosine + L-methionine + 2 oxidized [2Fe-2S]-[ferredoxin] + S-adenosyl-L-homocysteine. It catalyses the reaction adenosine(37) in tRNA + 2 reduced [2Fe-2S]-[ferredoxin] + 2 S-adenosyl-L-methionine = 2-methyladenosine(37) in tRNA + 5'-deoxyadenosine + L-methionine + 2 oxidized [2Fe-2S]-[ferredoxin] + S-adenosyl-L-homocysteine. In terms of biological role, specifically methylates position 2 of adenine 2503 in 23S rRNA and position 2 of adenine 37 in tRNAs. This chain is Probable dual-specificity RNA methyltransferase RlmN, found in Streptococcus agalactiae serotype III (strain NEM316).